The following is a 297-amino-acid chain: HTH-type transcriptional regulator ArgP (297 aa).

An HTH lysR-type domain is found at 4 to 60; it reads PDYRTLQALDAVIRERGFERAAQKLCITQSAVSQRIKQLENMFGQPLLVRTVPPRPT. A DNA-binding region (H-T-H motif) is located at residues 21–40; it reads FERAAQKLCITQSAVSQRIK.

This sequence belongs to the LysR transcriptional regulatory family. As to quaternary structure, homodimer.

Functionally, controls the transcription of genes involved in arginine and lysine metabolism. This Salmonella typhi protein is HTH-type transcriptional regulator ArgP.